The primary structure comprises 696 residues: DNA ligase (696 aa).

NAD(+) contacts are provided by residues 36–40 (DAEYD), 85–86 (SL), and Glu123. Lys125 acts as the N6-AMP-lysine intermediate in catalysis. Positions 146, 181, 319, and 343 each coordinate NAD(+). The Zn(2+) site is built by Cys437, Cys440, Cys455, and Cys461. Positions 618 to 696 (PEGTSLAGKT…EDGLKALLGL (79 aa)) constitute a BRCT domain.

It belongs to the NAD-dependent DNA ligase family. LigA subfamily. Mg(2+) serves as cofactor. Requires Mn(2+) as cofactor.

The catalysed reaction is NAD(+) + (deoxyribonucleotide)n-3'-hydroxyl + 5'-phospho-(deoxyribonucleotide)m = (deoxyribonucleotide)n+m + AMP + beta-nicotinamide D-nucleotide.. Functionally, DNA ligase that catalyzes the formation of phosphodiester linkages between 5'-phosphoryl and 3'-hydroxyl groups in double-stranded DNA using NAD as a coenzyme and as the energy source for the reaction. It is essential for DNA replication and repair of damaged DNA. The sequence is that of DNA ligase from Bordetella parapertussis (strain 12822 / ATCC BAA-587 / NCTC 13253).